Reading from the N-terminus, the 183-residue chain is dCTP deaminase (183 aa).

DCTP contacts are provided by residues 106 to 111 (KSTYAR), 130 to 132 (TLE), Q151, Y165, and Q175. E132 serves as the catalytic Proton donor/acceptor.

This sequence belongs to the dCTP deaminase family. In terms of assembly, homotrimer.

The enzyme catalyses dCTP + H2O + H(+) = dUTP + NH4(+). The protein operates within pyrimidine metabolism; dUMP biosynthesis; dUMP from dCTP (dUTP route): step 1/2. Functionally, catalyzes the deamination of dCTP to dUTP. The chain is dCTP deaminase from Acidobacterium capsulatum (strain ATCC 51196 / DSM 11244 / BCRC 80197 / JCM 7670 / NBRC 15755 / NCIMB 13165 / 161).